A 256-amino-acid chain; its full sequence is 1-(5-phosphoribosyl)-5-[(5-phosphoribosylamino)methylideneamino] imidazole-4-carboxamide isomerase (256 aa).

The Proton acceptor role is filled by aspartate 8. Aspartate 129 functions as the Proton donor in the catalytic mechanism.

This sequence belongs to the HisA/HisF family.

It localises to the cytoplasm. It catalyses the reaction 1-(5-phospho-beta-D-ribosyl)-5-[(5-phospho-beta-D-ribosylamino)methylideneamino]imidazole-4-carboxamide = 5-[(5-phospho-1-deoxy-D-ribulos-1-ylimino)methylamino]-1-(5-phospho-beta-D-ribosyl)imidazole-4-carboxamide. Its pathway is amino-acid biosynthesis; L-histidine biosynthesis; L-histidine from 5-phospho-alpha-D-ribose 1-diphosphate: step 4/9. The polypeptide is 1-(5-phosphoribosyl)-5-[(5-phosphoribosylamino)methylideneamino] imidazole-4-carboxamide isomerase (Synechococcus sp. (strain CC9311)).